Here is a 488-residue protein sequence, read N- to C-terminus: L-amino oxidase (488 aa).

Residues 60–61 (MS), 80–81 (EA), arginine 88, and 104–107 (GPMR) contribute to the FAD site. Substrate is bound by residues arginine 107 and tyrosine 388. A disulfide bond links cysteine 347 and cysteine 428. Residues glutamate 474 and 481–486 (GWIDST) contribute to the FAD site. 481 to 482 (GW) lines the substrate pocket.

This sequence belongs to the flavin monoamine oxidase family. FIG1 subfamily. In terms of assembly, monomer. This is in contrast with most of its orthologs, that are non-covalently linked homodimers. FAD serves as cofactor. In terms of processing, N-glycosylated. As to expression, expressed by the venom gland.

It localises to the secreted. It carries out the reaction an L-alpha-amino acid + O2 + H2O = a 2-oxocarboxylate + H2O2 + NH4(+). It catalyses the reaction L-leucine + O2 + H2O = 4-methyl-2-oxopentanoate + H2O2 + NH4(+). In terms of biological role, catalyzes an oxidative deamination of predominantly hydrophobic and aromatic L-amino acids, thus producing hydrogen peroxide that may contribute to the diverse toxic effects of this enzyme. Shows activity on L-Leu. Exhibits diverse biological activities, such as hemorrhage, hemolysis, edema, antibacterial and antiparasitic activities, as well as regulation of platelet aggregation. When tested on SW480 and SW620 human colon cancer cells, shows inhibition of cell proliferation, and induction of apoptosis, which is probably a consequence of the increased caspase-3 activity and the decreased Bcl-2 expression. The chain is L-amino oxidase from Trimeresurus purpureomaculatus (Mangrove pit viper).